A 472-amino-acid polypeptide reads, in one-letter code: Uronate isomerase (472 aa).

The protein belongs to the metallo-dependent hydrolases superfamily. Uronate isomerase family.

It carries out the reaction D-glucuronate = D-fructuronate. It catalyses the reaction aldehydo-D-galacturonate = keto-D-tagaturonate. Its pathway is carbohydrate metabolism; pentose and glucuronate interconversion. In Halalkalibacterium halodurans (strain ATCC BAA-125 / DSM 18197 / FERM 7344 / JCM 9153 / C-125) (Bacillus halodurans), this protein is Uronate isomerase.